Here is a 1385-residue protein sequence, read N- to C-terminus: Pesticidal crystal protein Cry5Aa (1385 aa).

2 disordered regions span residues 768-799 and 1359-1385; these read NITV…GQYN and PLPT…NNNQ. Positions 782–796 are enriched in gly residues; the sequence is NGGGDGGGNGGGDGG. A compositionally biased stretch (low complexity) spans 1370-1385; sequence NTASSTNSDTSMNNNQ.

It belongs to the delta endotoxin family.

Endotoxin with nematicidal activity. The polypeptide is Pesticidal crystal protein Cry5Aa (cry5Aa) (Bacillus thuringiensis subsp. darmstadiensis).